The sequence spans 364 residues: Methylenetetrahydrofolate--tRNA-(uracil-5-)-methyltransferase TrmFO (364 aa).

Glycine 11–glycine 16 contributes to the FAD binding site. Residues serine 335–leucine 352 show a composition bias toward polar residues. The interval serine 335–glutamine 364 is disordered.

This sequence belongs to the MnmG family. TrmFO subfamily. It depends on FAD as a cofactor.

Its subcellular location is the cytoplasm. The catalysed reaction is uridine(54) in tRNA + (6R)-5,10-methylene-5,6,7,8-tetrahydrofolate + NADH + H(+) = 5-methyluridine(54) in tRNA + (6S)-5,6,7,8-tetrahydrofolate + NAD(+). The enzyme catalyses uridine(54) in tRNA + (6R)-5,10-methylene-5,6,7,8-tetrahydrofolate + NADPH + H(+) = 5-methyluridine(54) in tRNA + (6S)-5,6,7,8-tetrahydrofolate + NADP(+). Functionally, catalyzes the folate-dependent formation of 5-methyl-uridine at position 54 (M-5-U54) in all tRNAs. This is Methylenetetrahydrofolate--tRNA-(uracil-5-)-methyltransferase TrmFO from Prochlorococcus marinus (strain MIT 9313).